A 332-amino-acid chain; its full sequence is Ubiquinol oxidase 1a, mitochondrial (332 aa).

The N-terminal 54 residues, M1–M54, are a transit peptide targeting the mitochondrion. A helical transmembrane segment spans residues A157–L177. E161, E200, and H203 together coordinate Fe cation. A helical transmembrane segment spans residues A219 to S239. Residues E251, E302, and H305 each coordinate Fe cation.

Belongs to the alternative oxidase family. As to quaternary structure, homodimer; disulfide-linked. The cofactor is Fe cation. As to expression, expressed in roots, leaf sheaths and leaf blades.

It is found in the mitochondrion inner membrane. It catalyses the reaction 2 a ubiquinol + O2 = 2 a ubiquinone + 2 H2O. Catalyzes the cyanide-resistant oxidation of ubiquinol and the reduction of molecular oxygen to water, but does not translocate protons and consequently is not linked to oxidative phosphorylation. May increase respiration when the cytochrome respiratory pathway is restricted, or in response to low temperatures. The chain is Ubiquinol oxidase 1a, mitochondrial from Oryza sativa subsp. japonica (Rice).